A 252-amino-acid chain; its full sequence is MTTGNGDAPVIKNAHSDIDSTNKTLLKSDALYKYVLDTTVLPREPECMRDLRLITDKHQWGFMQSSADEAQLLGMLLKMAGAKRTIEVGVFTGYSLLATALALPEDGKVVAIDPDRESYEIGRPFLEKAGVAHKVDFREGKGLEKLDELLAEEAAAGREAAFDFAFVDADKPNYVKYHEQLLQLVRVGGHIVYDNTLWAGTVALPPDTPLSDLDRRFSVAIRDLNSRLAADPRIDVCQLAIADGITICRRLV.

Residues serine 65, glutamate 87, 89-90 (GV), serine 95, and aspartate 113 contribute to the S-adenosyl-L-methionine site. Residue aspartate 168 coordinates a divalent metal cation. An S-adenosyl-L-methionine-binding site is contributed by aspartate 170. The a divalent metal cation site is built by aspartate 194 and asparagine 195.

Belongs to the class I-like SAM-binding methyltransferase superfamily. Cation-dependent O-methyltransferase family. CCoAMT subfamily. Mg(2+) serves as cofactor. It depends on Mn(2+) as a cofactor. Co(2+) is required as a cofactor. In terms of tissue distribution, ubiquitous. Highest expression in stems and roots.

It localises to the nucleus. The enzyme catalyses tricetin + 2 S-adenosyl-L-methionine = 3',5'-di-O-methyltricetin + 2 S-adenosyl-L-homocysteine + 2 H(+). Its function is as follows. Catalyzes the stepwise methylation of tricetin to its 3'-mono- and 3',5'-dimethyl ethers. No 3',4',5'-trimethylated ester derivatives are produced. Can use caffeoyl-CoA, 5-hydroxyferulic acid, luteolin, tricetin, quercetin, myrcetin and 7,8-dihydroxyflavone as substrates, but not naringenin, apigenin or kaempferol. The 2,3-double bond and the O-dihydroxyl group of the substrate are both required for catalytic activity of the enzyme. The chain is Tricin synthase 1 (ROMT-15) from Oryza sativa subsp. japonica (Rice).